The primary structure comprises 268 residues: Microtubule-associated protein RP/EB family member 1 (268 aa).

The residue at position 2 (A2) is an N-acetylalanine. Residues 14 to 116 form the Calponin-homology (CH) domain; sequence NLSRHDMLAW…FVQWFKKFFD (103 aa). Position 66 is an N6-crotonyllysine (K66). At Y124 the chain carries Phosphotyrosine. Residues 124–268 form an interaction with MTUS2/TIP150 region; it reads YDPVAARQGQ…GGPQEEQEEY (145 aa). Residues 146 to 160 are compositionally biased toward low complexity; it reads LNKPKKPLSSSSAAP. Positions 146–191 are disordered; it reads LNKPKKPLSSSSAAPQRPISTQRTAAAPKAGPGVVRKNPGVGNGDD. Residues S155 and S165 each carry the phosphoserine modification. One can recognise an EB1 C-terminal domain in the interval 185–255; it reads GVGNGDDEAA…LYATDEGFVI (71 aa). Residues 185-268 are interaction with CDK5RAP2; the sequence is GVGNGDDEAA…GGPQEEQEEY (84 aa). Residues 206 to 211 are interaction with APC; that stretch reads TVEDLE. The segment at 208–268 is DCTN1-binding; the sequence is EDLEKERDFY…GGPQEEQEEY (61 aa). K220 carries the post-translational modification N6-acetyllysine. Residues 220 to 242 are APC-binding; that stretch reads KLRNIELICQENEGENDPVLQRI. Residues 232–255 form an interaction with SKA1 region; the sequence is EGENDPVLQRIVDILYATDEGFVI.

Belongs to the MAPRE family. Homodimer. Heterodimer with MAPRE3. Interacts with DCTN1, DCTN2, TERF1 and dynein intermediate chain. Interaction with DIAPH1 and DIAPH2. Interacts (via C-terminal residues 206-211) with APC (via C-terminal residues 2674-2845); the interaction inhibits association with and bundling of F-actin. Interacts with CLASP2, DST, KIF2C and STIM1; probably required for their targeting to the growing microtubule plus ends. Interacts with MTUS2; interaction is direct and probably targets MTUS2 to microtubules. Interacts (via C-terminus) with SKA1 (via SXIP motif); the interaction is direct and stabilizes the kinetochore-microtubule attachment of the SKA1 complex. Interacts with APC2. Interacts with CLASP1. Interacts with CDK5RAP2. Interacts with MACF1. Interacts with RABL2/RABL2A; binds preferentially to GTP-bound RABL2. Interacts with KCNAB2. Interacts (via C-terminus) with CLIP1. Interacts with SLAIN2 and SLAIN1. Interacts with KIF18B; this interaction is required for efficient accumulation of KIF18B at microtubule plus ends. Interacts with MISP. Interacts with KNSTRN. Interacts with NCKAP5L. Interacts with CAMSAP2. Interacts with PDE4DIP isoform 13/MMG8/SMYLE; this interaction is required for its recruitment to the Golgi apparatus. Forms a pericentrosomal complex with AKAP9, CDK5RAP2 and PDE4DIP isoform 13/MMG8/SMYLE; within this complex, MAPRE1 binding to CDK5RAP2 may be mediated by PDE4DIP. Interacts with AKNA. Interacts with GAS2L1, GAS2L2, and GAS2L3. Interacts with RARRES1 and AGBL2. Acetylation at Lys-220 by KAT2B/PCAF promotes dynamic kinetochore-microtubule interactions in early mitosis. Post-translationally, crotonylated by KAT5 during mitosis, promoting astral microtubule plasticity and dynamic connection between astral microtubules and the cortex during mitotic chromosome segregation, thereby ensuring accurate spindle positioning in mitosis. Decrotonylated by HDAC3.

The protein resides in the cytoplasm. The protein localises to the cytoskeleton. Its subcellular location is the microtubule organizing center. It localises to the centrosome. It is found in the golgi apparatus. The protein resides in the spindle. The protein localises to the spindle pole. Plus-end tracking protein (+TIP) that binds to the plus-end of microtubules and regulates the dynamics of the microtubule cytoskeleton. Recruits other +TIP proteins to microtubules by binding to a conserved Ser-X-Leu-Pro (SXLP) motif in their polypeptide chains. Promotes cytoplasmic microtubule nucleation and elongation. Involved in mitotic spindle positioning by stabilizing microtubules and promoting dynamic connection between astral microtubules and the cortex during mitotic chromosome segregation. Assists chromosome alignment in metaphase by recruiting the SKA complex to the spindle and stabilizing its interactions with microtubule bundles (K-fibers). Also acts as a regulator of minus-end microtubule organization: interacts with the complex formed by AKAP9 and PDE4DIP, leading to recruit CAMSAP2 to the Golgi apparatus, thereby tethering non-centrosomal minus-end microtubules to the Golgi, an important step for polarized cell movement. Promotes elongation of CAMSAP2-decorated microtubule stretches on the minus-end of microtubules. Acts as a regulator of autophagosome transport via interaction with CAMSAP2. Functions downstream of Rho GTPases and DIAPH1 in stable microtubule formation. May play a role in cell migration. This Pongo abelii (Sumatran orangutan) protein is Microtubule-associated protein RP/EB family member 1 (MAPRE1).